The sequence spans 182 residues: Ribosome maturation factor RimM (182 aa).

A PRC barrel domain is found at 102–182 (GEGDYYWKDL…TIEVDWDPGF (81 aa)).

The protein belongs to the RimM family. In terms of assembly, binds ribosomal protein uS19.

Its subcellular location is the cytoplasm. Functionally, an accessory protein needed during the final step in the assembly of 30S ribosomal subunit, possibly for assembly of the head region. Essential for efficient processing of 16S rRNA. May be needed both before and after RbfA during the maturation of 16S rRNA. It has affinity for free ribosomal 30S subunits but not for 70S ribosomes. The protein is Ribosome maturation factor RimM of Pectobacterium carotovorum subsp. carotovorum (strain PC1).